Reading from the N-terminus, the 275-residue chain is NH(3)-dependent NAD(+) synthetase (275 aa).

46–53 provides a ligand contact to ATP; sequence GISGGQDS. Mg(2+) is bound at residue aspartate 52. Arginine 141 contributes to the deamido-NAD(+) binding site. Threonine 161 lines the ATP pocket. Glutamate 166 is a binding site for Mg(2+). Lysine 174 and aspartate 181 together coordinate deamido-NAD(+). ATP contacts are provided by lysine 190 and threonine 212. 261–262 serves as a coordination point for deamido-NAD(+); it reads HK.

Belongs to the NAD synthetase family. Homodimer.

The enzyme catalyses deamido-NAD(+) + NH4(+) + ATP = AMP + diphosphate + NAD(+) + H(+). It participates in cofactor biosynthesis; NAD(+) biosynthesis; NAD(+) from deamido-NAD(+) (ammonia route): step 1/1. Catalyzes the ATP-dependent amidation of deamido-NAD to form NAD. Uses ammonia as a nitrogen source. The chain is NH(3)-dependent NAD(+) synthetase from Limosilactobacillus reuteri (strain DSM 20016) (Lactobacillus reuteri).